Here is a 56-residue protein sequence, read N- to C-terminus: Large ribosomal subunit protein bL33 (56 aa).

This sequence belongs to the bacterial ribosomal protein bL33 family.

This Marinomonas sp. (strain MWYL1) protein is Large ribosomal subunit protein bL33.